Consider the following 63-residue polypeptide: Large ribosomal subunit protein uL29 (63 aa).

The protein belongs to the universal ribosomal protein uL29 family.

This is Large ribosomal subunit protein uL29 (rpmC) from Aggregatibacter actinomycetemcomitans (Actinobacillus actinomycetemcomitans).